The following is a 428-amino-acid chain: UDP-N-acetylglucosamine 1-carboxyvinyltransferase 2 (428 aa).

22–23 (KN) provides a ligand contact to phosphoenolpyruvate. R92 contacts UDP-N-acetyl-alpha-D-glucosamine. The Proton donor role is filled by C116. C116 carries the 2-(S-cysteinyl)pyruvic acid O-phosphothioketal modification. UDP-N-acetyl-alpha-D-glucosamine is bound by residues 121-125 (RPIDQ), D304, and I326.

Belongs to the EPSP synthase family. MurA subfamily.

Its subcellular location is the cytoplasm. It catalyses the reaction phosphoenolpyruvate + UDP-N-acetyl-alpha-D-glucosamine = UDP-N-acetyl-3-O-(1-carboxyvinyl)-alpha-D-glucosamine + phosphate. The protein operates within cell wall biogenesis; peptidoglycan biosynthesis. In terms of biological role, cell wall formation. Adds enolpyruvyl to UDP-N-acetylglucosamine. This Geobacillus kaustophilus (strain HTA426) protein is UDP-N-acetylglucosamine 1-carboxyvinyltransferase 2.